The sequence spans 805 residues: Serine/threonine-protein kinase fused (805 aa).

The Protein kinase domain maps to tyrosine 4–valine 254. ATP contacts are provided by residues valine 10 to valine 18 and lysine 33. Catalysis depends on aspartate 125, which acts as the Proton acceptor. A disordered region spans residues lysine 269–glutamate 289. Basic and acidic residues predominate over residues alanine 278–aspartate 287. A phosphoserine mark is found at serine 422 and serine 429. Residues isoleucine 447–glutamate 456 are compositionally biased toward basic and acidic residues. Residues isoleucine 447 to threonine 496 are disordered.

It belongs to the protein kinase superfamily. Ser/Thr protein kinase family. Expressed in all imaginal disks, higher level in wing disk.

It carries out the reaction L-seryl-[protein] + ATP = O-phospho-L-seryl-[protein] + ADP + H(+). It catalyses the reaction L-threonyl-[protein] + ATP = O-phospho-L-threonyl-[protein] + ADP + H(+). In terms of biological role, probable serine/threonine-protein kinase; maternally required for correct patterning in the posterior part of each embryonic metamere. May be involved in control of cell division during metamorphosis and ovarian development. May interact with costal-2. The sequence is that of Serine/threonine-protein kinase fused (fu) from Drosophila melanogaster (Fruit fly).